Consider the following 427-residue polypeptide: Glutamyl-tRNA(Gln) amidotransferase subunit D (427 aa).

A compositionally biased stretch (basic and acidic residues) spans 1–18; that stretch reads MTADPGDRVRVTHGDASH. The segment at 1–20 is disordered; sequence MTADPGDRVRVTHGDASHEG. The Asparaginase/glutaminase domain maps to 80-413; that stretch reads PTIALISTGG…DDPEAAMQES (334 aa). Catalysis depends on residues Thr-90, Thr-166, Asp-167, and Lys-243.

The protein belongs to the asparaginase 1 family. GatD subfamily. Heterodimer of GatD and GatE.

It carries out the reaction L-glutamyl-tRNA(Gln) + L-glutamine + ATP + H2O = L-glutaminyl-tRNA(Gln) + L-glutamate + ADP + phosphate + H(+). Its function is as follows. Allows the formation of correctly charged Gln-tRNA(Gln) through the transamidation of misacylated Glu-tRNA(Gln) in organisms which lack glutaminyl-tRNA synthetase. The reaction takes place in the presence of glutamine and ATP through an activated gamma-phospho-Glu-tRNA(Gln). The GatDE system is specific for glutamate and does not act on aspartate. The polypeptide is Glutamyl-tRNA(Gln) amidotransferase subunit D (Halobacterium salinarum (strain ATCC 29341 / DSM 671 / R1)).